We begin with the raw amino-acid sequence, 424 residues long: UPF0597 protein Sputw3181_2955 (424 aa).

It belongs to the UPF0597 family.

The protein is UPF0597 protein Sputw3181_2955 of Shewanella sp. (strain W3-18-1).